We begin with the raw amino-acid sequence, 490 residues long: 5'-3' exonuclease PLD3 (490 aa).

Topologically, residues 1 to 38 (MKPKLMYQELKVPAEEPASELPMNEIEAWKAAEKKARW) are cytoplasmic. Residues 39 to 59 (VLLVLILAVVGFGALMTQLFL) form a helical; Signal-anchor for type II membrane protein membrane-spanning segment. Over 60 to 490 (WEYGDLHLFG…DSVGNACRLL (431 aa)) the chain is Lumenal. Cystine bridges form between Cys-77–Cys-239 and Cys-81–Cys-237. Residues Asn-97 and Asn-132 are each glycosylated (N-linked (GlcNAc...) asparagine). The region spanning 196–223 (THGVLHTKFWVVDQTHFYLGSANMDWRS) is the PLD phosphodiesterase 1 domain. Active-site residues include His-201, Lys-203, and Asp-208. The active-site Proton donor is His-201. Phosphate is bound by residues His-201 and Lys-203. Residue Asn-218 coordinates phosphate. Residues Asn-236, Asn-284, and Asn-387 are each glycosylated (N-linked (GlcNAc...) asparagine). An intrachain disulfide couples Cys-366 to Cys-487. The PLD phosphodiesterase 2 domain maps to 411–437 (YARVNHNKYMVTERATYIGTSNWSGSY). His-416 provides a ligand contact to phosphate. Catalysis depends on His-416, which acts as the Nucleophile. Phe-438 serves as a coordination point for Mg(2+).

It belongs to the phospholipase D family. Homodimer. Interacts with APP. N-glycosylated. In terms of processing, proteolytically processed to a soluble form that is stable within endosomes and lysosomes. During transport through the secretory pathway becomes proteolysed by cysteine proteases, thereby releasing a stable soluble lysosomal lumenal polypeptide, whereas the transmembrane-bound fragment is rapidly degraded. Its transport route to lysosomes involves ubiquitination and the ESCRT complex. Post-translationally, ubiquitinated. Ubiquitination mediates sorting into lysosomes.

The protein resides in the endoplasmic reticulum membrane. The protein localises to the lysosome lumen. Its subcellular location is the early endosome membrane. It is found in the late endosome membrane. It localises to the golgi apparatus membrane. The protein resides in the endosome membrane. The catalysed reaction is Exonucleolytic cleavage in the 5'- to 3'-direction to yield nucleoside 3'-phosphates.. The enzyme catalyses a 5'-end 5'-dephospho-ribonucleotidyl-ribonucleotide-RNA + H2O = a ribonucleoside 3'-phosphate + a 5'-end dephospho-ribonucleoside-RNA + H(+). It catalyses the reaction a ribonucleoside 3'-phosphate-2'-3'-cyclophospho-GMP + H2O = a ribonucleoside 3'-phosphate + 2',3'-cyclophospho-GMP + H(+). It carries out the reaction a 5'-end 5'-dephospho-2'-deoxyribonucleotidyl-2'-deoxyribonucleotide in single-stranded DNA + H2O = a 5'-end dephospho-2'-deoxyribonucleoside in single-stranded DNA + a 2'-deoxyribonucleoside 3'-phosphate + H(+). The catalysed reaction is a 5'-end 5'-phospho-2'-deoxyribonucleotide in single-stranded DNA + H2O = a 5'-end 5'-dephospho-2'-deoxyribonucleotide in single-stranded DNA + phosphate. The enzyme catalyses a 3-lyso-sn-glycero-1-phospho-(3'-acyl-1'-sn-glycerol) + a 1-acyl-sn-glycerol = a 3-acyl-sn-glycero-1-phospho-(3'-acyl-1'-sn-glycerol) + glycerol. It catalyses the reaction 3-lyso-sn-glycero-1-phospho-(3'-(9Z-octadecenoyl)-1'-sn-glycerol) + 1-(9Z-octadecenoyl)-sn-glycerol = 3-(9Z-octadecenoyl)-sn-glycero-1-phospho-(3'-(9Z-octadecenoyl)-1'-sn-glycerol) + glycerol. Its function is as follows. 5'-&gt;3' exonuclease that hydrolyzes the phosphodiester bond of single-stranded DNA (ssDNA) and RNA molecules to form nucleoside 3'-monophosphates and 5'-end 5'-hydroxy deoxyribonucleotide/ribonucleotide fragments. Partially redundant with PLD4, can cleave all four nucleotides displaying higher efficiency for ssDNA and RNA fragments initiated with uridine and guanosine residues and lower efficiency for cytidine-initiated substrates. As a result, it does not always degrade polynucleotides to the single nucleotide level, it can stall at specific sites sparing certain fragments from exonucleolytic degradation. Processes self and pathogenic ssDNA and RNA molecules that reach the endolysosomal compartment via phagocytosis or autophagy and may serve as 'danger' signals for recognition by innate immune receptors such as toll-like receptors (TLRs). Degrades mitochondrial CpG-rich ssDNA fragments to prevent TLR9 activation and autoinflammatory response, but it can cleave viral RNA to generate ligands for TLR7 activation and initiate antiviral immune responses. In plasmacytoid dendritic cells, it cooperates with endonuclease RNASET2 to release 2',3'-cyclic guanosine monophosphate (2',3'-cGMP), a potent stimulatory ligand for TLR7. Produces 2',3'-cGMPs and cytidine-rich RNA fragments that occupy TLR7 ligand-binding pockets and trigger a signaling-competent state. Can exert polynucleotide phosphatase activity toward 5'-phosphorylated ssDNA substrates although at a slow rate. Transphosphatidylase that catalyzes the exchange with R to S stereo-inversion of the glycerol moiety between (S,R)-lysophosphatidylglycerol (LPG) and monoacylglycerol (MAG) substrates to yield (S,S)-bis(monoacylglycero)phosphate (BMP). Can synthesize a variety of (S,S)-BMPs representing the main phospholipid constituent of lysosomal intralumenal vesicle (ILV) membranes that bind acid hydrolases for lipid degradation. Regulates the homeostasis and interorganellar communication of the endolysosomal system with an overall impact on cellular removal of dysfunctional organelles via autophagy as well as proper protein and lipid turnover. May play a role in myotube formation in response to ER stress. The chain is 5'-3' exonuclease PLD3 (PLD3) from Bos taurus (Bovine).